The sequence spans 215 residues: Cytochrome b6 (215 aa).

Residues 32 to 52 (IFYCLGGITLTCFLVQVATGF) form a helical membrane-spanning segment. Cys35 is a heme c binding site. Heme b is bound by residues His86 and His100. 3 helical membrane-spanning segments follow: residues 90–110 (ASMM…TGGF), 116–136 (LTWV…VTGY), and 186–206 (LHTF…FLMI). Positions 187 and 202 each coordinate heme b.

It belongs to the cytochrome b family. PetB subfamily. In terms of assembly, the 4 large subunits of the cytochrome b6-f complex are cytochrome b6, subunit IV (17 kDa polypeptide, PetD), cytochrome f and the Rieske protein, while the 4 small subunits are PetG, PetL, PetM and PetN. The complex functions as a dimer. Heme b serves as cofactor. It depends on heme c as a cofactor.

The protein resides in the plastid. Its subcellular location is the chloroplast thylakoid membrane. Its function is as follows. Component of the cytochrome b6-f complex, which mediates electron transfer between photosystem II (PSII) and photosystem I (PSI), cyclic electron flow around PSI, and state transitions. The sequence is that of Cytochrome b6 from Pinus thunbergii (Japanese black pine).